We begin with the raw amino-acid sequence, 321 residues long: Peroxidase 5 (321 aa).

A signal peptide spans 1-24; sequence MERFSLRFVLMMVSIILTSSICQA. Pyrrolidone carboxylic acid is present on Gln-25. 4 disulfide bridges follow: Cys-35-Cys-115, Cys-68-Cys-73, Cys-121-Cys-317, and Cys-201-Cys-227. Catalysis depends on His-66, which acts as the Proton acceptor. The Ca(2+) site is built by Asp-67, Val-70, Gly-72, Asp-74, and Ser-76. Substrate is bound at residue Pro-164. His-194 is a binding site for heme b. A Ca(2+)-binding site is contributed by Thr-195. N-linked (GlcNAc...) asparagine glycosylation occurs at Asn-211. The Ca(2+) site is built by Asp-240, Thr-243, and Asp-248. The N-linked (GlcNAc...) asparagine glycan is linked to Asn-285.

It belongs to the peroxidase family. Classical plant (class III) peroxidase subfamily. Heme b serves as cofactor. Requires Ca(2+) as cofactor.

It localises to the secreted. It carries out the reaction 2 a phenolic donor + H2O2 = 2 a phenolic radical donor + 2 H2O. In terms of biological role, removal of H(2)O(2), oxidation of toxic reductants, biosynthesis and degradation of lignin, suberization, auxin catabolism, response to environmental stresses such as wounding, pathogen attack and oxidative stress. These functions might be dependent on each isozyme/isoform in each plant tissue. This is Peroxidase 5 (PER5) from Arabidopsis thaliana (Mouse-ear cress).